Consider the following 186-residue polypeptide: Nicotinamide-nucleotide adenylyltransferase (186 aa).

This sequence belongs to the archaeal NMN adenylyltransferase family.

It is found in the cytoplasm. It catalyses the reaction beta-nicotinamide D-ribonucleotide + ATP + H(+) = diphosphate + NAD(+). Its pathway is cofactor biosynthesis; NAD(+) biosynthesis; NAD(+) from nicotinamide D-ribonucleotide: step 1/1. The chain is Nicotinamide-nucleotide adenylyltransferase from Pyrococcus abyssi (strain GE5 / Orsay).